A 199-amino-acid polypeptide reads, in one-letter code: Recombination protein RecR (199 aa).

The C4-type zinc-finger motif lies at 57–72 (CEICGNMDTKNICHIC). The Toprim domain occupies 80 to 175 (STIAIVETVA…KISRLASGIP (96 aa)).

It belongs to the RecR family.

Functionally, may play a role in DNA repair. It seems to be involved in an RecBC-independent recombinational process of DNA repair. It may act with RecF and RecO. The protein is Recombination protein RecR of Rickettsia typhi (strain ATCC VR-144 / Wilmington).